Here is a 143-residue protein sequence, read N- to C-terminus: Holo-[acyl-carrier-protein] synthase (143 aa).

Positions 9 and 63 each coordinate Mg(2+).

This sequence belongs to the P-Pant transferase superfamily. AcpS family. It depends on Mg(2+) as a cofactor.

The protein localises to the cytoplasm. The catalysed reaction is apo-[ACP] + CoA = holo-[ACP] + adenosine 3',5'-bisphosphate + H(+). In terms of biological role, transfers the 4'-phosphopantetheine moiety from coenzyme A to a Ser of acyl-carrier-protein. The chain is Holo-[acyl-carrier-protein] synthase from Burkholderia pseudomallei (strain 668).